The chain runs to 138 residues: ATP synthase epsilon chain, chloroplastic (138 aa).

The protein belongs to the ATPase epsilon chain family. In terms of assembly, F-type ATPases have 2 components, CF(1) - the catalytic core - and CF(0) - the membrane proton channel. CF(1) has five subunits: alpha(3), beta(3), gamma(1), delta(1), epsilon(1). CF(0) has three main subunits: a, b and c.

It localises to the plastid. It is found in the chloroplast thylakoid membrane. Produces ATP from ADP in the presence of a proton gradient across the membrane. The polypeptide is ATP synthase epsilon chain, chloroplastic (Anthoceros angustus (Hornwort)).